A 125-amino-acid polypeptide reads, in one-letter code: MIQKAVSNSSTSFGSITMTDNALTSDVPVNSTVVGQSQGFYAGAAQRELGFLMAMNFAFKTGKYNGSTITILGRNTVFSKVREMTVVGGSGIFRLARGYVEARTKWFDPKTGDATVEYNCYVLHY.

N-linked (GlcNAc...) asparagine glycans are attached at residues N8, N30, and N65.

It belongs to the plant dirigent protein family. As to quaternary structure, homodimer.

It localises to the secreted. Its subcellular location is the extracellular space. The protein resides in the apoplast. In terms of biological role, dirigent proteins impart stereoselectivity on the phenoxy radical-coupling reaction, yielding optically active lignans from two molecules of coniferyl alcohol in the biosynthesis of lignans, flavonolignans, and alkaloids and thus plays a central role in plant secondary metabolism. In Arabidopsis thaliana (Mouse-ear cress), this protein is Dirigent protein 22 (DIR22).